The following is a 205-amino-acid chain: High frequency lysogenization protein HflD homolog (205 aa).

This sequence belongs to the HflD family.

It localises to the cytoplasm. The protein resides in the cell inner membrane. In Vibrio campbellii (strain ATCC BAA-1116), this protein is High frequency lysogenization protein HflD homolog.